A 352-amino-acid chain; its full sequence is Ribosomal lysine N-methyltransferase 5 (352 aa).

Residues W107, G161–G163, D183, W244, and L274 each bind S-adenosyl-L-methionine.

This sequence belongs to the class I-like SAM-binding methyltransferase superfamily. RKM5 family.

Its function is as follows. S-adenosyl-L-methionine-dependent protein-lysine N-methyltransferase that methylates 60S ribosomal protein L1. This is Ribosomal lysine N-methyltransferase 5 (RKM5) from Candida glabrata (strain ATCC 2001 / BCRC 20586 / JCM 3761 / NBRC 0622 / NRRL Y-65 / CBS 138) (Yeast).